A 216-amino-acid chain; its full sequence is 3-keto-L-gulonate-6-phosphate decarboxylase UlaD (216 aa).

Residue Asp11 coordinates substrate. Glu33 and Asp62 together coordinate Mg(2+). Arg192 lines the substrate pocket.

Belongs to the HPS/KGPDC family. KGPDC subfamily. In terms of assembly, homodimer. The cofactor is Mg(2+).

It catalyses the reaction 3-dehydro-L-gulonate 6-phosphate + H(+) = L-xylulose 5-phosphate + CO2. It functions in the pathway cofactor degradation; L-ascorbate degradation; D-xylulose 5-phosphate from L-ascorbate: step 2/4. In terms of biological role, catalyzes the decarboxylation of 3-keto-L-gulonate-6-P into L-xylulose-5-P. Is involved in the anaerobic L-ascorbate utilization. This Escherichia coli O17:K52:H18 (strain UMN026 / ExPEC) protein is 3-keto-L-gulonate-6-phosphate decarboxylase UlaD.